Consider the following 183-residue polypeptide: ATP synthase subunit b, chloroplastic (183 aa).

Residues 20–42 (INTNVFETNIINLAIVVGTLFYY) traverse the membrane as a helical segment.

This sequence belongs to the ATPase B chain family. F-type ATPases have 2 components, F(1) - the catalytic core - and F(0) - the membrane proton channel. F(1) has five subunits: alpha(3), beta(3), gamma(1), delta(1), epsilon(1). F(0) has four main subunits: a(1), b(1), b'(1) and c(10-14). The alpha and beta chains form an alternating ring which encloses part of the gamma chain. F(1) is attached to F(0) by a central stalk formed by the gamma and epsilon chains, while a peripheral stalk is formed by the delta, b and b' chains.

It is found in the plastid. Its subcellular location is the chloroplast thylakoid membrane. Functionally, f(1)F(0) ATP synthase produces ATP from ADP in the presence of a proton or sodium gradient. F-type ATPases consist of two structural domains, F(1) containing the extramembraneous catalytic core and F(0) containing the membrane proton channel, linked together by a central stalk and a peripheral stalk. During catalysis, ATP synthesis in the catalytic domain of F(1) is coupled via a rotary mechanism of the central stalk subunits to proton translocation. In terms of biological role, component of the F(0) channel, it forms part of the peripheral stalk, linking F(1) to F(0). The sequence is that of ATP synthase subunit b, chloroplastic from Euglena gracilis.